The chain runs to 705 residues: Prolyl endopeptidase (705 aa).

Residues 1–20 (MKYNKLSVAVAAFAFAAVSA) form the signal peptide. Catalysis depends on charge relay system residues Ser556 and His675.

Belongs to the peptidase S9A family. As to quaternary structure, monomer.

It localises to the periplasm. It catalyses the reaction Hydrolysis of Pro-|-Xaa &gt;&gt; Ala-|-Xaa in oligopeptides.. Cleaves peptide bonds on the C-terminal side of prolyl residues within peptides that are up to approximately 30 amino acids long. Has an absolute requirement for an X-Pro bond in the trans configuration immediately preceding the Pro-Y scissible bond. This chain is Prolyl endopeptidase (f1pep1), found in Elizabethkingia meningoseptica (Chryseobacterium meningosepticum).